The primary structure comprises 134 residues: Small ribosomal subunit protein uS11 (134 aa).

It belongs to the universal ribosomal protein uS11 family. In terms of assembly, part of the 30S ribosomal subunit. Interacts with proteins S7 and S18. Binds to IF-3.

Its function is as follows. Located on the platform of the 30S subunit, it bridges several disparate RNA helices of the 16S rRNA. Forms part of the Shine-Dalgarno cleft in the 70S ribosome. This chain is Small ribosomal subunit protein uS11, found in Polaromonas sp. (strain JS666 / ATCC BAA-500).